The chain runs to 141 residues: Putative pre-16S rRNA nuclease (141 aa).

It belongs to the YqgF nuclease family.

The protein localises to the cytoplasm. Could be a nuclease involved in processing of the 5'-end of pre-16S rRNA. This chain is Putative pre-16S rRNA nuclease, found in Shewanella oneidensis (strain ATCC 700550 / JCM 31522 / CIP 106686 / LMG 19005 / NCIMB 14063 / MR-1).